The chain runs to 115 residues: Mobilization protein MbeC (115 aa).

The protein to E.coli MbaC and MbkC. Homodimer. Interacts with MbeA and MbeB to form the relaxosome.

Functionally, required for efficient mobilization of ColE1 plasmid and is thus essential to promote the specific transfer of the plasmid during conjugation. Probably functions by inducing DNA bending, helping the MbeA relaxase to melt the DNA around the nic site and cleave the phosphodiester bond. Binds specifically double-stranded DNA (dsDNA) containing the ColE1 oriT but does not recognize the inverted repeat (IR). This is Mobilization protein MbeC (mbeC) from Escherichia coli.